The chain runs to 310 residues: tRNA pseudouridine synthase B (310 aa).

Aspartate 49 acts as the Nucleophile in catalysis.

It belongs to the pseudouridine synthase TruB family. Type 1 subfamily.

It catalyses the reaction uridine(55) in tRNA = pseudouridine(55) in tRNA. Functionally, responsible for synthesis of pseudouridine from uracil-55 in the psi GC loop of transfer RNAs. The polypeptide is tRNA pseudouridine synthase B (Rhizobium etli (strain ATCC 51251 / DSM 11541 / JCM 21823 / NBRC 15573 / CFN 42)).